Reading from the N-terminus, the 536-residue chain is uncharacterized protein (536 aa).

Residues 163 to 394 enclose the Radical SAM core domain; that stretch reads LDAYDSMSVQ…MNFIPTRPLE (232 aa). The [4Fe-4S] cluster site is built by cysteine 177, cysteine 181, and cysteine 184.

Requires [4Fe-4S] cluster as cofactor.

This is an uncharacterized protein from Synechocystis sp. (strain ATCC 27184 / PCC 6803 / Kazusa).